The chain runs to 230 residues: Large ribosomal subunit protein uL1 (230 aa).

It belongs to the universal ribosomal protein uL1 family. In terms of assembly, part of the 50S ribosomal subunit.

In terms of biological role, binds directly to 23S rRNA. The L1 stalk is quite mobile in the ribosome, and is involved in E site tRNA release. Functionally, protein L1 is also a translational repressor protein, it controls the translation of the L11 operon by binding to its mRNA. The polypeptide is Large ribosomal subunit protein uL1 (Sulfurimonas denitrificans (strain ATCC 33889 / DSM 1251) (Thiomicrospira denitrificans (strain ATCC 33889 / DSM 1251))).